Reading from the N-terminus, the 242-residue chain is Dihydropteridine reductase (242 aa).

12–36 (LVYGGRGALGSRCVQAFRARNWWVA) is a binding site for NADP(+). 4 positions are modified to N6-succinyllysine: lysine 71, lysine 77, lysine 94, and lysine 100. The active-site Proton acceptor is the tyrosine 148.

This sequence belongs to the short-chain dehydrogenases/reductases (SDR) family. In terms of assembly, homodimer.

The catalysed reaction is 5,6,7,8-tetrahydropteridine + NAD(+) = 6,7-dihydropteridine + NADH + H(+). The enzyme catalyses 5,6,7,8-tetrahydropteridine + NADP(+) = 6,7-dihydropteridine + NADPH + H(+). Catalyzes the conversion of quinonoid dihydrobiopterin into tetrahydrobiopterin. The chain is Dihydropteridine reductase (QDPR) from Bos taurus (Bovine).